The following is a 605-amino-acid chain: F-box/WD repeat-containing protein 1A (605 aa).

The tract at residues 128-177 (ASYEKEKELCVKYFEQWSESDQVEFVEHLISQMCHYQHGHINSYLKPMLQ) is homodimerization domain D. One can recognise an F-box domain in the interval 190–228 (DHIAENILSYLDAKSLCAAELVCKEWYRVTSDGMLWKKL). The segment at 190 to 228 (DHIAENILSYLDAKSLCAAELVCKEWYRVTSDGMLWKKL) is required for down-regulation of SNAI1. WD repeat units follow at residues 301–338 (ETSK…CKRI), 341–378 (GHTG…MLNT), 381–418 (HHCE…DITL), 424–461 (GHRA…FVRT), 464–503 (GHKR…RVLE), 505–541 (HEEL…DPRA), and 553–590 (EHSG…AAQA).

In terms of assembly, homodimer. Self-associates. Component of the SCF(BTRC) complex formed of CUL1, SKP1, RBX1 and a BTRC dimer. Direct interaction with SKP1 occurs via the F-box domain. Interacts with phosphorylated ubiquitination substrates SMAD3 and SMAD4. Interacts with phosphorylated ubiquitination substrates CTNNB1, NFKBIA, NFKBIB, NFKBIE, NFKB1/nuclear factor NF-kappa-B p105 subunit, ATF4, CDC25A, DLG1, FBXO5 and SNAI1; the interaction requires the phosphorylation of the 2 serine residues in the substrate destruction motif D-S-G-X(2,3,4)-S. Binds UBQLN1. Interacts with CDC34 and UBE2R2. Interacts with FBXW11. Interacts with CUL4A and DDB1. Part of a SCF(BTRC)-like complex lacking CUL1, which is associated with phosphorylated NKBIA and RELA; RELA interacts directly with NFKBIA. Interacts with the phosphorylated form of GLI3. Interacts with CLU. Interacts with PER1 (phosphorylated), PER2 (phosphorylated) and PER3. Interacts with phosphorylated ubiquitination substrate CEP68. Interacts with ZC3H12A; this interaction occurs when ZC3H12A is phosphorylated in a IKBKB/IKKB-dependent manner. Interacts with HSF1; this interaction occurs during mitosis and induces HSF1 ubiquitin-dependent degradation, a process inhibited by CDC20. Interacts with NFE2L1. Interacts with INAVA. Interacts with IL10RA; this interaction leads to IL10RA ubiquitination and subsequent degradation. Interacts with REST. Interacts with KLF4; this interaction leads to KLF4 ubiquitination and subsequent degradation. Interacts with UBR2, as part of a SCF(BTRC) complex; the interaction mediates 'Lys-48'-linked ubiquitination of UBR2 and is regulated by DUSP22 in the T-cell receptor signaling pathway. (Microbial infection) Interacts with vaccinia virus A49; this interaction inhibits NF-kappa-B activation. As to quaternary structure, (Microbial infection) Interacts with HIV-1 Vpu. Post-translationally, ubiquitinated. Deubiquitinated by OTUD5, promoting its stability. Expressed in epididymis (at protein level).

Its subcellular location is the cytoplasm. The protein localises to the nucleus. The protein operates within protein modification; protein ubiquitination. Functionally, substrate recognition component of a SCF (SKP1-CUL1-F-box protein) E3 ubiquitin-protein ligase complex which mediates the ubiquitination and subsequent proteasomal degradation of target proteins. Recognizes and binds to phosphorylated target proteins. SCF(BTRC) mediates the ubiquitination of CTNNB1 and participates in Wnt signaling. SCF(BTRC) mediates the ubiquitination of phosphorylated NFKB1, ATF4, CDC25A, DLG1, FBXO5, PER1, SMAD3, SMAD4, SNAI1 and probably NFKB2. SCF(BTRC) mediates the ubiquitination of NFKBIA, NFKBIB and NFKBIE; the degradation frees the associated NFKB1 to translocate into the nucleus and to activate transcription. Ubiquitination of NFKBIA occurs at 'Lys-21' and 'Lys-22'. The SCF(FBXW11) complex also regulates NF-kappa-B by mediating ubiquitination of phosphorylated NFKB1: specifically ubiquitinates the p105 form of NFKB1, leading to its degradation. SCF(BTRC) mediates the ubiquitination of CEP68; this is required for centriole separation during mitosis. SCF(BTRC) mediates the ubiquitination and subsequent degradation of nuclear NFE2L1. Has an essential role in the control of the clock-dependent transcription via degradation of phosphorylated PER1 and PER2. May be involved in ubiquitination and subsequent proteasomal degradation through a DBB1-CUL4 E3 ubiquitin-protein ligase. Required for activation of NFKB-mediated transcription by IL1B, MAP3K14, MAP3K1, IKBKB and TNF. Required for proteolytic processing of GLI3. Mediates ubiquitination of REST, thereby leading to its proteasomal degradation. SCF(BTRC) mediates the ubiquitination and subsequent proteasomal degradation of KLF4; thereby negatively regulating cell pluripotency maintenance and embryogenesis. SCF(BTRC) acts as a regulator of mTORC1 signaling pathway by catalyzing ubiquitination and subsequent proteasomal degradation of phosphorylated DEPTOR, TFE3 and MITF. SCF(BTRC) directs 'Lys-48'-linked ubiquitination of UBR2 in the T-cell receptor signaling pathway. The protein is F-box/WD repeat-containing protein 1A (BTRC) of Homo sapiens (Human).